A 281-amino-acid polypeptide reads, in one-letter code: Large ribosomal subunit protein uL2 (281 aa).

Positions 223 to 255 (TVRGSVMNPNDHPHGGGEGRAPIGRKSPVTPWG) are disordered.

This sequence belongs to the universal ribosomal protein uL2 family. Part of the 50S ribosomal subunit. Forms a bridge to the 30S subunit in the 70S ribosome.

One of the primary rRNA binding proteins. Required for association of the 30S and 50S subunits to form the 70S ribosome, for tRNA binding and peptide bond formation. It has been suggested to have peptidyltransferase activity; this is somewhat controversial. Makes several contacts with the 16S rRNA in the 70S ribosome. The sequence is that of Large ribosomal subunit protein uL2 from Mycoplasma capricolum subsp. capricolum (strain California kid / ATCC 27343 / NCTC 10154).